The following is a 143-amino-acid chain: Transcriptional regulatory protein RosR (143 aa).

The C2H3-type zinc-finger motif lies at C79–H97.

The protein belongs to the ros/MucR family.

The protein is Transcriptional regulatory protein RosR (rosR) of Rhizobium etli (strain ATCC 51251 / DSM 11541 / JCM 21823 / NBRC 15573 / CFN 42).